Here is a 246-residue protein sequence, read N- to C-terminus: Acetoacetate decarboxylase (246 aa).

Catalysis depends on Lys-116, which acts as the Schiff-base intermediate with acetoacetate.

Belongs to the ADC family.

It carries out the reaction acetoacetate + H(+) = acetone + CO2. Functionally, catalyzes the conversion of acetoacetate to acetone and carbon dioxide. In Burkholderia cenocepacia (strain ATCC BAA-245 / DSM 16553 / LMG 16656 / NCTC 13227 / J2315 / CF5610) (Burkholderia cepacia (strain J2315)), this protein is Acetoacetate decarboxylase.